The following is a 262-amino-acid chain: Probable carboxylesterase SOBER1-like (262 aa).

Active-site charge relay system residues include serine 151, aspartate 205, and histidine 237.

Belongs to the AB hydrolase superfamily. AB hydrolase 2 family.

Carboxylesterase. The sequence is that of Probable carboxylesterase SOBER1-like from Arabidopsis thaliana (Mouse-ear cress).